Reading from the N-terminus, the 426-residue chain is Histidine--tRNA ligase (426 aa).

This sequence belongs to the class-II aminoacyl-tRNA synthetase family. As to quaternary structure, homodimer.

The protein resides in the cytoplasm. It carries out the reaction tRNA(His) + L-histidine + ATP = L-histidyl-tRNA(His) + AMP + diphosphate + H(+). The chain is Histidine--tRNA ligase from Prochlorococcus marinus (strain MIT 9312).